The following is a 517-amino-acid chain: Maturase K (517 aa).

This sequence belongs to the intron maturase 2 family. MatK subfamily.

Its subcellular location is the plastid. The protein resides in the chloroplast. Functionally, usually encoded in the trnK tRNA gene intron. Probably assists in splicing its own and other chloroplast group II introns. This is Maturase K from Caryota mitis (Burmese fishtail palm).